Consider the following 469-residue polypeptide: 2-oxoisovalerate dehydrogenase subunit beta, mitochondrial (469 aa).

Residues 1 to 40 constitute a mitochondrion transit peptide; it reads MKRSTVVIRPSARALSRQASSQSFLLARSSALTSRQRRLY. A thiamine diphosphate-binding site is contributed by Tyr167. The K(+) site is built by Gly194, Leu196, and Thr197.

In terms of assembly, heterotetramer of 2 alpha and 2 beta chains. Thiamine diphosphate is required as a cofactor.

The protein resides in the mitochondrion matrix. It carries out the reaction N(6)-[(R)-lipoyl]-L-lysyl-[protein] + 3-methyl-2-oxobutanoate + H(+) = N(6)-[(R)-S(8)-2-methylpropanoyldihydrolipoyl]-L-lysyl-[protein] + CO2. Functionally, the branched-chain alpha-keto dehydrogenase complex catalyzes the overall conversion of alpha-keto acids to acyl-CoA and CO(2). It contains multiple copies of three enzymatic components: branched-chain alpha-keto acid decarboxylase (E1), lipoamide acyltransferase (E2) and lipoamide dehydrogenase (E3). The protein is 2-oxoisovalerate dehydrogenase subunit beta, mitochondrial of Chaetomium thermophilum (strain DSM 1495 / CBS 144.50 / IMI 039719) (Thermochaetoides thermophila).